The chain runs to 600 residues: Elongation factor 4 (600 aa).

The 183-residue stretch at Ser-4–Ser-186 folds into the tr-type G domain. Residues Asp-16–Thr-21 and Asn-133–Asp-136 each bind GTP.

The protein belongs to the TRAFAC class translation factor GTPase superfamily. Classic translation factor GTPase family. LepA subfamily.

It is found in the cell membrane. It carries out the reaction GTP + H2O = GDP + phosphate + H(+). In terms of biological role, required for accurate and efficient protein synthesis under certain stress conditions. May act as a fidelity factor of the translation reaction, by catalyzing a one-codon backward translocation of tRNAs on improperly translocated ribosomes. Back-translocation proceeds from a post-translocation (POST) complex to a pre-translocation (PRE) complex, thus giving elongation factor G a second chance to translocate the tRNAs correctly. Binds to ribosomes in a GTP-dependent manner. This Mycoplasma capricolum subsp. capricolum (strain California kid / ATCC 27343 / NCTC 10154) protein is Elongation factor 4.